The primary structure comprises 403 residues: Creatinase (403 aa).

The active site involves H232.

The protein belongs to the peptidase M24 family. Creatinase subfamily. Homodimer.

It catalyses the reaction creatine + H2O = sarcosine + urea. The chain is Creatinase from Flavobacterium sp. (strain U-188).